The chain runs to 410 residues: Pyruvate dehydrogenase complex protein X component, mitochondrial (410 aa).

A mitochondrion-targeting transit peptide spans 1 to 30 (MLSAISKVSTLKSCTRYLTKCNYHASAKLL). The Lipoyl-binding domain occupies 32 to 108 (VKTFSMPAMS…DVGEPIAYIA (77 aa)). Residue Lys73 is modified to N6-lipoyllysine. One can recognise a Peripheral subunit-binding (PSBD) domain in the interval 169 to 210 (TLLPSVSLLLAENNISKQKALKEIAPSGSNGRLLKGDVLAYL).

The protein belongs to the 2-oxoacid dehydrogenase family. As to quaternary structure, eukaryotic pyruvate dehydrogenase (PDH) complexes are organized as a core consisting of the oligomeric dihydrolipoamide acetyl-transferase (E2), around which are arranged multiple copies of pyruvate dehydrogenase (E1), dihydrolipoamide dehydrogenase (E3) and protein X (E3BP) bound by non-covalent bonds.

The protein resides in the mitochondrion matrix. Required for anchoring dihydrolipoamide dehydrogenase (E3) to the dihydrolipoamide transacetylase (E2) core of the pyruvate dehydrogenase complexes of eukaryotes. This specific binding is essential for a functional PDH complex. The polypeptide is Pyruvate dehydrogenase complex protein X component, mitochondrial (PDX1) (Saccharomyces cerevisiae (strain ATCC 204508 / S288c) (Baker's yeast)).